The chain runs to 303 residues: Pycsar effector protein XpPycTIR (303 aa).

Position 14-138 (14-138 (LVATLTEHRL…RRIAATLARR (125 aa))) interacts with a nucleoside 3',5'-cyclic phosphate. A TIR-like region spans residues 154-273 (RVFIMSSVEA…DLAGLTTIPY (120 aa)).

The protein resides in the cytoplasm. It carries out the reaction NAD(+) + H2O = ADP-D-ribose + nicotinamide + H(+). In terms of biological role, pycsar (pyrimidine cyclase system for antiphage resistance) provides immunity against bacteriophage. The pyrimidine cyclase (PycC) synthesizes cyclic nucleotides in response to infection; these serve as specific second messenger signals. The signals activate the adjacent effector, leading to bacterial cell death and abortive phage infection. A clade B Pycsar system. The effector gene of a two-gene Pycsar system. Expression of this and adjacent uridylate cyclase XpPycC (AC P0DV28) confers resistance to bacteriophage T7. When cells expressing the Pycsar system are infected by phage T7 at low multiplicity of infection (0.2 MOI) the culture survivey, at 2.0 MOI bacteria enter growth arrest. The same cells enter growth arrest after exposure to 2.5 mM cUMP but not cCMP; the effector protein responds only to the cUMP usually produced by its cognate NTP cyclase. NAD(+) levels in infected cells are depleted between 5 and 10 minutes after infection with T7 at MOI of 2. Probably only responds to cUMP. This chain is Pycsar effector protein XpPycTIR, found in Xanthomonas perforans.